A 304-amino-acid chain; its full sequence is L-threonate dehydrogenase (304 aa).

NAD(+) contacts are provided by residues tyrosine 7–valine 35 and threonine 102. Lysine 178 is an active-site residue. An NAD(+)-binding site is contributed by lysine 246.

The protein belongs to the HIBADH-related family. L-threonate dehydrogenase subfamily.

It catalyses the reaction L-threonate + NAD(+) = 2-dehydro-L-erythronate + NADH + H(+). Functionally, catalyzes oxidation of L-threonate to 2-oxo-tetronate. Can use either NAD(+) or NADP(+) as cosubstrate, with a preference for NAD(+). The polypeptide is L-threonate dehydrogenase (Pectobacterium atrosepticum (strain SCRI 1043 / ATCC BAA-672) (Erwinia carotovora subsp. atroseptica)).